We begin with the raw amino-acid sequence, 416 residues long: Glutamyl-tRNA reductase (416 aa).

Residues 49-52 (TCNR), Ser105, 110-112 (EPQ), and Gln116 each bind substrate. Catalysis depends on Cys50, which acts as the Nucleophile. 185 to 190 (GAGETI) contacts NADP(+).

The protein belongs to the glutamyl-tRNA reductase family. In terms of assembly, homodimer.

The enzyme catalyses (S)-4-amino-5-oxopentanoate + tRNA(Glu) + NADP(+) = L-glutamyl-tRNA(Glu) + NADPH + H(+). It participates in porphyrin-containing compound metabolism; protoporphyrin-IX biosynthesis; 5-aminolevulinate from L-glutamyl-tRNA(Glu): step 1/2. Catalyzes the NADPH-dependent reduction of glutamyl-tRNA(Glu) to glutamate 1-semialdehyde (GSA). This chain is Glutamyl-tRNA reductase, found in Shewanella sp. (strain MR-7).